Reading from the N-terminus, the 336-residue chain is Pyridoxal 5'-phosphate synthase subunit PdxS (336 aa).

Asp62 lines the D-ribose 5-phosphate pocket. The active-site Schiff-base intermediate with D-ribose 5-phosphate is Lys119. Position 191 (Gly191) interacts with D-ribose 5-phosphate. Residue Lys203 participates in D-glyceraldehyde 3-phosphate binding. D-ribose 5-phosphate is bound by residues Gly254 and 275–276; that span reads GS.

The protein belongs to the PdxS/SNZ family. As to quaternary structure, in the presence of PdxT, forms a dodecamer of heterodimers.

The catalysed reaction is aldehydo-D-ribose 5-phosphate + D-glyceraldehyde 3-phosphate + L-glutamine = pyridoxal 5'-phosphate + L-glutamate + phosphate + 3 H2O + H(+). It functions in the pathway cofactor biosynthesis; pyridoxal 5'-phosphate biosynthesis. Its function is as follows. Catalyzes the formation of pyridoxal 5'-phosphate from ribose 5-phosphate (RBP), glyceraldehyde 3-phosphate (G3P) and ammonia. The ammonia is provided by the PdxT subunit. Can also use ribulose 5-phosphate and dihydroxyacetone phosphate as substrates, resulting from enzyme-catalyzed isomerization of RBP and G3P, respectively. In Pyrobaculum calidifontis (strain DSM 21063 / JCM 11548 / VA1), this protein is Pyridoxal 5'-phosphate synthase subunit PdxS.